Consider the following 381-residue polypeptide: Hydrogenase nickel incorporation protein HupN (381 aa).

Topologically, residues 1–39 (MLPFSMTGLEKDHTRGVLILANAHRRSERSRTASCAGPA) are cytoplasmic. Residues 40-60 (VLFGGLITANIVAWAWAFALF) form a helical membrane-spanning segment. The Periplasmic segment spans residues 61 to 63 (ADR). The chain crosses the membrane as a helical span at residues 64 to 84 (PVVMATALLAWVFGLRHAVDA). Over 85–110 (DHIAAIDNVVRSLMQTGGTPRSAGLY) the chain is Cytoplasmic. The helical transmembrane segment at 111–131 (FALGHSSVVVVATMLLALGVV) threads the bilayer. Over 132 to 149 (SLGGDGLLKEIGSFIGAS) the chain is Periplasmic. The helical transmembrane segment at 150–170 (VSALFLLVIAAINLAIFASLW) threads the bilayer. At 171–215 (RTFRKAREQGIRDAAGLDALLAHRGILVRLLGPMFRLVTKPWHMY) the chain is on the cytoplasmic side. Residues 216–236 (PLGFLFGLGFDTATEIGLLSI) form a helical membrane-spanning segment. Residues 237–243 (SASEAAR) are Periplasmic-facing. The chain crosses the membrane as a helical span at residues 244–264 (GASLADVMVFPALFAAGMALV). Residues 265 to 292 (DTADSTLMVSAYRWAFVDPMRKLWYNLT) lie on the Cytoplasmic side of the membrane. Residues 293–313 (ITGASVAVALFIGGIEALGLI) form a helical membrane-spanning segment. Residues 314 to 333 (GNRLDLSGGVWTLIDALNES) lie on the Periplasmic side of the membrane. Residues 334-354 (LANVGLAVIALFAIAWLLSIV) form a helical membrane-spanning segment. The Cytoplasmic portion of the chain corresponds to 355 to 381 (LYRRLIAGSSGLADTEVLECADATEAV).

This sequence belongs to the NiCoT transporter (TC 2.A.52) family.

It localises to the cell inner membrane. Functionally, involved in nickel incorporation/metabolism into the hydrogenase apoprotein. In Bradyrhizobium diazoefficiens (strain JCM 10833 / BCRC 13528 / IAM 13628 / NBRC 14792 / USDA 110), this protein is Hydrogenase nickel incorporation protein HupN (hupN).